A 367-amino-acid chain; its full sequence is Alanine racemase (367 aa).

The Proton acceptor; specific for D-alanine role is filled by lysine 35. Position 35 is an N6-(pyridoxal phosphate)lysine (lysine 35). Arginine 130 is a substrate binding site. Tyrosine 258 acts as the Proton acceptor; specific for L-alanine in catalysis. Residue methionine 306 participates in substrate binding.

This sequence belongs to the alanine racemase family. Pyridoxal 5'-phosphate is required as a cofactor.

It carries out the reaction L-alanine = D-alanine. The protein operates within amino-acid biosynthesis; D-alanine biosynthesis; D-alanine from L-alanine: step 1/1. In terms of biological role, catalyzes the interconversion of L-alanine and D-alanine. May also act on other amino acids. The polypeptide is Alanine racemase (alr) (Acinetobacter baumannii (strain SDF)).